A 502-amino-acid polypeptide reads, in one-letter code: ATP synthase subunit alpha (502 aa).

The disordered stretch occupies residues 115–135; sequence VDGLGPINTTNTRPIESPAPG. Residue 169–176 coordinates ATP; the sequence is GDRQTGKT.

It belongs to the ATPase alpha/beta chains family. In terms of assembly, F-type ATPases have 2 components, CF(1) - the catalytic core - and CF(0) - the membrane proton channel. CF(1) has five subunits: alpha(3), beta(3), gamma(1), delta(1), epsilon(1). CF(0) has three main subunits: a(1), b(2) and c(9-12). The alpha and beta chains form an alternating ring which encloses part of the gamma chain. CF(1) is attached to CF(0) by a central stalk formed by the gamma and epsilon chains, while a peripheral stalk is formed by the delta and b chains.

Its subcellular location is the cell membrane. It catalyses the reaction ATP + H2O + 4 H(+)(in) = ADP + phosphate + 5 H(+)(out). In terms of biological role, produces ATP from ADP in the presence of a proton gradient across the membrane. The alpha chain is a regulatory subunit. This chain is ATP synthase subunit alpha, found in Bacillus mycoides (strain KBAB4) (Bacillus weihenstephanensis).